The sequence spans 358 residues: Phospho-N-acetylmuramoyl-pentapeptide-transferase (358 aa).

10 consecutive transmembrane segments (helical) span residues 19 to 39, 71 to 91, 95 to 115, 126 to 146, 166 to 186, 194 to 214, 237 to 257, 261 to 281, 286 to 306, and 336 to 356; these read YLTLRAILSTLTALLIAVLIG, TMGGLLILAAIVVSVLLWADL, YVWVTLSVVVGYGIIGFIDDY, LIARWKYFWQSVIAIGVALYL, VMPQMGMFFVVMTYFVIVGTS, GLDGLAIVPTVLVAGAFAIFA, LVIVCTAIVGAGLGFLWFNTY, VFMGDVGSLALGGTLGIIAVL, IVLVIMGGVFVVETLSVILQV, and VIVRFWIISIILVLVGLATLK.

This sequence belongs to the glycosyltransferase 4 family. MraY subfamily. Mg(2+) is required as a cofactor.

It localises to the cell inner membrane. The enzyme catalyses UDP-N-acetyl-alpha-D-muramoyl-L-alanyl-gamma-D-glutamyl-meso-2,6-diaminopimeloyl-D-alanyl-D-alanine + di-trans,octa-cis-undecaprenyl phosphate = di-trans,octa-cis-undecaprenyl diphospho-N-acetyl-alpha-D-muramoyl-L-alanyl-D-glutamyl-meso-2,6-diaminopimeloyl-D-alanyl-D-alanine + UMP. It participates in cell wall biogenesis; peptidoglycan biosynthesis. Functionally, catalyzes the initial step of the lipid cycle reactions in the biosynthesis of the cell wall peptidoglycan: transfers peptidoglycan precursor phospho-MurNAc-pentapeptide from UDP-MurNAc-pentapeptide onto the lipid carrier undecaprenyl phosphate, yielding undecaprenyl-pyrophosphoryl-MurNAc-pentapeptide, known as lipid I. This Pseudoalteromonas atlantica (strain T6c / ATCC BAA-1087) protein is Phospho-N-acetylmuramoyl-pentapeptide-transferase.